Consider the following 286-residue polypeptide: Puff II/9-1 protein (286 aa).

The N-terminal stretch at 1–19 is a signal peptide; the sequence is MKQFIVLTVVLLAIQELQG. The segment at 61-235 is helical; that stretch reads ITAIKKDNDF…ENALNTLRCE (175 aa). An N-linked (GlcNAc...) asparagine glycan is attached at asparagine 156.

This Bradysia coprophila (Dark-winged fungus gnat) protein is Puff II/9-1 protein (II/9-1).